A 1253-amino-acid polypeptide reads, in one-letter code: Cytoplasmic FMR1-interacting protein 1 (1253 aa).

Position 583 is a phosphoserine (S583). T1234 carries the post-translational modification Phosphothreonine.

This sequence belongs to the CYFIP family. As to quaternary structure, component of the WAVE1 complex composed of ABI2, CYFIP1 or CYFIP2, BRK1, NCKAP1 and WASF1/WAVE1. Within the complex, a heterodimer containing NCKAP1 and CYFIP1 interacts with a heterotrimer formed by WAVE1, ABI2 and BRK1. Component of the CYFIP1-EIF4E-FMR1 complex which is composed of CYFIP, EIF4E and FMR1. Interacts with FMR1 but does not bind to related proteins FXR1 or FXR2. Interaction with EIF4E stimulates FMR1 binding. Component of the WAVE2 complex composed of ABI1, CYFIP1/SRA1, NCKAP1/NAP1 (NCKAP1l/HEM1 in hematopoietic cells) and WASF2/WAVE2. Interacts with the active GTP-bound form of RAC1. Interacts through its C-terminus with the C-terminus of DPYSL2/CRMP2 which is necessary for DPYSL2-induced axon outgrowth. Interacts with NYAP1, NYAP2 and MYO16. Interacts with TMEM108 (via N-terminus); the interaction associates TMEM108 with the WAVE1 complex.

Its subcellular location is the cytoplasm. The protein resides in the perinuclear region. It is found in the cell projection. It localises to the lamellipodium. The protein localises to the ruffle. Its subcellular location is the synapse. The protein resides in the synaptosome. Its function is as follows. Component of the CYFIP1-EIF4E-FMR1 complex which binds to the mRNA cap and mediates translational repression. In the CYFIP1-EIF4E-FMR1 complex this subunit is an adapter between EIF4E and FMR1. Promotes the translation repression activity of FMR1 in brain probably by mediating its association with EIF4E and mRNA. Regulates formation of membrane ruffles and lamellipodia. Plays a role in axon outgrowth. Binds to F-actin but not to RNA. Part of the WAVE complex that regulates actin filament reorganization via its interaction with the Arp2/3 complex. Actin remodeling activity is regulated by RAC1. Regulator of epithelial morphogenesis. As component of the WAVE1 complex, required for BDNF-NTRK2 endocytic trafficking and signaling from early endosomes. May act as an invasion suppressor in cancers. In Homo sapiens (Human), this protein is Cytoplasmic FMR1-interacting protein 1.